The sequence spans 2376 residues: Reducing polyketide synthase DEP5 (2376 aa).

One can recognise a Ketosynthase family 3 (KS3) domain in the interval 47–477; the sequence is LEPIAVVGMG…GTNAHTIIES (431 aa). Catalysis depends on for beta-ketoacyl synthase activity residues Cys221, His358, and His399. The segment at 593–906 is malonyl-CoA:ACP transacylase (MAT) domain; that stretch reads VFTGQGAQWA…QYLPTLVRGF (314 aa). The active-site For malonyltransferase activity is the Ser685. Residues 983 to 1121 are N-terminal hotdog fold; it reads HDVLGQLTTG…GSIAIRTSAR (139 aa). The interval 983–1158 is dehydratase (DH) domain; sequence HDVLGQLTTG…FNYGPTFQDM (176 aa). Positions 983 to 1286 constitute a PKS/mFAS DH domain; that stretch reads HDVLGQLTTG…CIAYEAAIPQ (304 aa). His1015 (proton acceptor; for dehydratase activity) is an active-site residue. A C-terminal hotdog fold region spans residues 1131-1286; it reads LPQRASGRLW…CIAYEAAIPQ (156 aa). Asp1195 serves as the catalytic Proton donor; for dehydratase activity. The segment at 1659 to 1964 is enoyl reductase (ER) domain; that stretch reads GRIQAGKVVF…DSICDNKIVI (306 aa). The tract at residues 1988–2163 is ketoreductase (KR) domain; it reads ATYLLVGCLG…KPACAVVLPM (176 aa). The Carrier domain maps to 2289–2368; that stretch reads DLVRDHFIAK…KFSELVCGAQ (80 aa). Ser2327 carries the O-(pantetheine 4'-phosphoryl)serine modification.

It functions in the pathway polyketide biosynthesis. Functionally, reducing polyketide synthase; part of the gene cluster that mediates the biosynthesis of depudecin, a highly oxidized eleven-carbon linear polyketide that acts as a histone deacetylase (HDAC) inhibitor and makes a small contribution to pathogenesis. The reducing polyketide synthase DEP5 is the central enzyme in depudecin biosynthesis by yielding the backbone polyketide chain. The monooxygenases DEP2 and DEP4, as well as the uncharacterized protein DEP1, then act as tailoring enzymes to modify the intermediate polyketide chain into depudecin. The polypeptide is Reducing polyketide synthase DEP5 (Alternaria brassicicola (Dark leaf spot agent)).